Reading from the N-terminus, the 1355-residue chain is Probable aldehyde oxidase 2 (1355 aa).

A 2Fe-2S ferredoxin-type domain is found at 9-96 (RPVVVTVNGE…HCAVTTSEGI (88 aa)). Positions 48, 53, 56, and 78 each coordinate [2Fe-2S] cluster. The FAD-binding PCMH-type domain maps to 244 to 422 (VAVTGDGWFH…VSISIPDWGS (179 aa)). A disordered region spans residues 544–577 (PENANVPNGSCTNGTANGSANSSPEKHSNVDSSD). Positions 548–566 (NVPNGSCTNGTANGSANSS) are enriched in polar residues.

Belongs to the xanthine dehydrogenase family. In terms of assembly, aldehyde oxidases (AO) are homodimers and heterodimers of AO subunits. Requires [2Fe-2S] cluster as cofactor. The cofactor is FAD. Mo-molybdopterin is required as a cofactor.

The catalysed reaction is an aldehyde + O2 + H2O = a carboxylate + H2O2 + H(+). The chain is Probable aldehyde oxidase 2 from Oryza sativa subsp. japonica (Rice).